A 953-amino-acid chain; its full sequence is GATA zinc finger domain-containing protein 14 (953 aa).

Residues 1–21 are compositionally biased toward polar residues; sequence MFEKIPNQNSHSMGDNNTGYY. Disordered regions lie at residues 1–109 and 216–756; these read MFEK…SPNR and TYGS…TQPQ. Residues 22–89 are compositionally biased toward low complexity; the sequence is NNNNNNNNNN…QLPSPQLSQP (68 aa). The span at 90–109 shows a compositional bias: polar residues; it reads NSMNTTPNQTSPNLRSSPNR. Composition is skewed to low complexity over residues 219–330, 342–683, and 690–756; these read SSNT…VNAN, NIYN…PNSS, and GNNG…TQPQ. The GATA-type zinc finger occupies 893–918; sequence CTSCGTTQTPEWRKGPAGGKSLCNAC. Residues 934-953 form a disordered region; the sequence is KVETTSSPPSTSMNVVNLLN.

The chain is GATA zinc finger domain-containing protein 14 (gtaN) from Dictyostelium discoideum (Social amoeba).